Reading from the N-terminus, the 406-residue chain is Accessory Sec system protein translocase subunit SecY2 (406 aa).

10 helical membrane-spanning segments follow: residues Ser14–Ile34, Phe63–Phe83, Phe108–Ile128, Gly131–Leu151, Ser156–Pro176, Leu190–Val210, Phe246–Leu266, Pro285–Val305, Ala344–Ile364, and Tyr368–Val388.

It belongs to the SecY/SEC61-alpha family. SecY2 subfamily. In terms of assembly, component of the accessory SecA2/SecY2 protein translocase complex required to export cell wall proteins. May form heterotrimers with SecE and SecG subunits.

The protein localises to the cell membrane. Part of the accessory SecA2/SecY2 system specifically required for export of possible cell wall proteins. The central subunit of a protein translocation channel. This chain is Accessory Sec system protein translocase subunit SecY2, found in Streptococcus salivarius (strain CCHSS3).